The sequence spans 269 residues: Diadenylate cyclase (269 aa).

A DAC domain is found at 109 to 266 (RSGIYDLFAN…GGKMILEIDP (158 aa)).

This sequence belongs to the adenylate cyclase family. DacZ subfamily. The cofactor is Mn(2+).

The enzyme catalyses 2 ATP = 3',3'-c-di-AMP + 2 diphosphate. Functionally, diadenylate cyclase that catalyzes the condensation of 2 ATP molecules into cyclic di-AMP (c-di-AMP). c-di-AMP is a second messenger for intracellular signal transduction involved in the control of important regulatory processes such as osmoregulation. Is essential for H.volcanii. Overexpression of DacZ leads to cell death, suggesting the need for tight regulation of c-di-AMP levels. Cannot use GTP as substrate. The polypeptide is Diadenylate cyclase (Haloferax volcanii (strain ATCC 29605 / DSM 3757 / JCM 8879 / NBRC 14742 / NCIMB 2012 / VKM B-1768 / DS2) (Halobacterium volcanii)).